Consider the following 285-residue polypeptide: Sulfotransferase 2A1 (285 aa).

The 3'-phosphoadenylyl sulfate site is built by Lys44, Ser45, Gly46, Thr47, Asn48, and Trp49. The active-site Proton acceptor is His99. Positions 121, 129, 184, 218, 223, 247, 248, and 249 each coordinate 3'-phosphoadenylyl sulfate. Position 251 is a phosphoserine (Ser251).

This sequence belongs to the sulfotransferase 1 family. As to quaternary structure, homodimer. Predominanly expressed in liver. Detected also in adrenal gland and in jejunum.

Its subcellular location is the cytoplasm. The protein resides in the cytosol. The catalysed reaction is an alcohol + 3'-phosphoadenylyl sulfate = an alkyl sulfate + adenosine 3',5'-bisphosphate + H(+). It carries out the reaction 3beta-hydroxyandrost-5-en-17-one + 3'-phosphoadenylyl sulfate = dehydroepiandrosterone 3-sulfate + adenosine 3',5'-bisphosphate + H(+). It catalyses the reaction taurolithocholate + 3'-phosphoadenylyl sulfate = taurolithocholate 3-sulfate + adenosine 3',5'-bisphosphate + H(+). The enzyme catalyses lithocholate + 3'-phosphoadenylyl sulfate = lithocholate sulfate + adenosine 3',5'-bisphosphate + H(+). The catalysed reaction is (24S)-hydroxycholesterol + 3'-phosphoadenylyl sulfate = (24S)-hydroxycholesterol 24-sulfate + adenosine 3',5'-bisphosphate + H(+). It carries out the reaction (24S)-hydroxycholesterol + 3'-phosphoadenylyl sulfate = (24S)-hydroxycholesterol 3-sulfate + adenosine 3',5'-bisphosphate + H(+). It catalyses the reaction (24S)-hydroxycholesterol 24-sulfate + 3'-phosphoadenylyl sulfate = (24S)-hydroxycholesterol 3,24-disulfate + adenosine 3',5'-bisphosphate + H(+). The enzyme catalyses pregnenolone + 3'-phosphoadenylyl sulfate = pregnenolone sulfate + adenosine 3',5'-bisphosphate + H(+). The catalysed reaction is androsterone + 3'-phosphoadenylyl sulfate = androsterone 3alpha-sulfate + adenosine 3',5'-bisphosphate + H(+). In terms of biological role, sulfotransferase that utilizes 3'-phospho-5'-adenylyl sulfate (PAPS) as sulfonate donor to catalyze the sulfonation of steroids and bile acids in the liver and adrenal glands. Mediates the sulfation of a wide range of steroids and sterols, including pregnenolone, androsterone, DHEA, bile acids, cholesterol and as well many xenobiotics that contain alcohol and phenol functional groups. Sulfonation increases the water solubility of most compounds, and therefore their renal excretion, but it can also result in bioactivation to form active metabolites. Plays an important role in maintening steroid and lipid homeostasis. Plays a key role in bile acid metabolism. In addition, catalyzes the metabolic activation of potent carcinogenic polycyclic arylmethanols. The protein is Sulfotransferase 2A1 (SULT2A1) of Macaca fascicularis (Crab-eating macaque).